A 77-amino-acid chain; its full sequence is Large ribosomal subunit protein eL14 (77 aa).

It belongs to the eukaryotic ribosomal protein eL14 family.

The sequence is that of Large ribosomal subunit protein eL14 from Methanococcus maripaludis (strain C5 / ATCC BAA-1333).